We begin with the raw amino-acid sequence, 299 residues long: ATP phosphoribosyltransferase (299 aa).

The protein belongs to the ATP phosphoribosyltransferase family. Long subfamily. It depends on Mg(2+) as a cofactor.

The protein resides in the cytoplasm. It catalyses the reaction 1-(5-phospho-beta-D-ribosyl)-ATP + diphosphate = 5-phospho-alpha-D-ribose 1-diphosphate + ATP. Its pathway is amino-acid biosynthesis; L-histidine biosynthesis; L-histidine from 5-phospho-alpha-D-ribose 1-diphosphate: step 1/9. Feedback inhibited by histidine. Catalyzes the condensation of ATP and 5-phosphoribose 1-diphosphate to form N'-(5'-phosphoribosyl)-ATP (PR-ATP). Has a crucial role in the pathway because the rate of histidine biosynthesis seems to be controlled primarily by regulation of HisG enzymatic activity. In Shewanella sp. (strain MR-7), this protein is ATP phosphoribosyltransferase.